Here is a 450-residue protein sequence, read N- to C-terminus: Putative cysteine--tRNA ligase 2 (450 aa).

A 'HIGH' region motif is present at residues 29 to 39; sequence ITPYKSTHLGH. The 'KMSKS' region motif lies at 270 to 274; that stretch reads KMSKS. An ATP-binding site is contributed by lysine 273. The interval 372–392 is disordered; that stretch reads PIHPKHSPQMRDYSEHGSAGQ.

Belongs to the class-I aminoacyl-tRNA synthetase family. In terms of assembly, monomer.

It is found in the cytoplasm. The enzyme catalyses tRNA(Cys) + L-cysteine + ATP = L-cysteinyl-tRNA(Cys) + AMP + diphosphate. The polypeptide is Putative cysteine--tRNA ligase 2 (cysS2) (Tropheryma whipplei (strain TW08/27) (Whipple's bacillus)).